Reading from the N-terminus, the 352-residue chain is Cyclin-dependent kinase-like 1 (352 aa).

Positions 4–287 (YEKIGKIGEG…CEQLLQHPYF (284 aa)) constitute a Protein kinase domain. Residues 10-18 (IGEGSYGVV) and Lys-33 each bind ATP. Residues 45–51 (KKIALRE) carry the [NKR]KIAxRE motif. Asp-126 serves as the catalytic Proton acceptor.

Belongs to the protein kinase superfamily. CMGC Ser/Thr protein kinase family. CDC2/CDKX subfamily.

The protein resides in the cytoplasm. Its subcellular location is the nucleus. The catalysed reaction is L-seryl-[protein] + ATP = O-phospho-L-seryl-[protein] + ADP + H(+). The enzyme catalyses L-threonyl-[protein] + ATP = O-phospho-L-threonyl-[protein] + ADP + H(+). This Rattus norvegicus (Rat) protein is Cyclin-dependent kinase-like 1.